The primary structure comprises 328 residues: 7,8-didemethyl-8-hydroxy-5-deazariboflavin synthase (328 aa).

In terms of domain architecture, Radical SAM core spans methionine 1–asparagine 242. [4Fe-4S] cluster-binding residues include cysteine 15, cysteine 19, and cysteine 22.

Belongs to the radical SAM superfamily. CofG family. Consists of two subunits, CofG and CofH. [4Fe-4S] cluster is required as a cofactor.

The enzyme catalyses 5-amino-5-(4-hydroxybenzyl)-6-(D-ribitylimino)-5,6-dihydrouracil + S-adenosyl-L-methionine = 7,8-didemethyl-8-hydroxy-5-deazariboflavin + 5'-deoxyadenosine + L-methionine + NH4(+) + H(+). It participates in cofactor biosynthesis; coenzyme F0 biosynthesis. Functionally, catalyzes the radical-mediated synthesis of 7,8-didemethyl-8-hydroxy-5-deazariboflavin from 5-amino-5-(4-hydroxybenzyl)-6-(D-ribitylimino)-5,6-dihydrouracil. This Methanothermobacter thermautotrophicus (strain ATCC 29096 / DSM 1053 / JCM 10044 / NBRC 100330 / Delta H) (Methanobacterium thermoautotrophicum) protein is 7,8-didemethyl-8-hydroxy-5-deazariboflavin synthase.